The chain runs to 425 residues: Glutamyl-tRNA reductase (425 aa).

Substrate is bound by residues 47–50, S107, 112–114, and Q118; these read TCNR and EDQ. C48 acts as the Nucleophile in catalysis. 187–192 contacts NADP(+); the sequence is GAGHMA.

The protein belongs to the glutamyl-tRNA reductase family. As to quaternary structure, homodimer.

The catalysed reaction is (S)-4-amino-5-oxopentanoate + tRNA(Glu) + NADP(+) = L-glutamyl-tRNA(Glu) + NADPH + H(+). The protein operates within porphyrin-containing compound metabolism; protoporphyrin-IX biosynthesis; 5-aminolevulinate from L-glutamyl-tRNA(Glu): step 1/2. It functions in the pathway porphyrin-containing compound metabolism; chlorophyll biosynthesis. Catalyzes the NADPH-dependent reduction of glutamyl-tRNA(Glu) to glutamate 1-semialdehyde (GSA). This is Glutamyl-tRNA reductase from Roseiflexus castenholzii (strain DSM 13941 / HLO8).